Consider the following 123-residue polypeptide: Fluoride-specific ion channel FluC 2 (123 aa).

The next 4 membrane-spanning stretches (helical) occupy residues 3-23, 38-58, 62-82, and 94-114; these read LDGFIYILVGSTFGLIVRMFI, ILIVNVLASLFLGIFEGLNIT, LILFIFVGFLGCFSTFSSFIY, and LILLIYYAEVILLSFLFFCLG. G72 and S75 together coordinate Na(+).

The protein belongs to the fluoride channel Fluc/FEX (TC 1.A.43) family.

It localises to the cell inner membrane. It catalyses the reaction fluoride(in) = fluoride(out). Na(+) is not transported, but it plays an essential structural role and its presence is essential for fluoride channel function. Functionally, fluoride-specific ion channel. Important for reducing fluoride concentration in the cell, thus reducing its toxicity. This is Fluoride-specific ion channel FluC 2 from Prochlorococcus marinus subsp. pastoris (strain CCMP1986 / NIES-2087 / MED4).